The chain runs to 686 residues: Forkhead box protein P1 (686 aa).

Composition is skewed to polar residues over residues 1–19 (MMQE…IQNG) and 279–292 (IINP…QLSV). 2 disordered regions span residues 1 to 23 (MMQE…ASGG) and 279 to 306 (IINP…EEHS). A compositionally biased stretch (basic and acidic residues) spans 295–306 (PKRESLSHEEHS). The C2H2-type zinc finger occupies 315 to 340 (GVCKWPGCEAVCEDFQSFLKHLNSEH). Positions 357 to 378 (VQQLELQLAKDKERLQAMMTHL) are leucine-zipper. The segment at 391 to 395 (PLNLV) is CTBP1-binding. Residues 403-412 (TASEASPQSL) are compositionally biased toward polar residues. Residues 403–440 (TASEASPQSLPHTPTTPTAPITPVTQGPSVITTTSMHN) form a disordered region. The segment covering 413–427 (PHTPTTPTAPITPVT) has biased composition (low complexity). Residues 428 to 439 (QGPSVITTTSMH) are compositionally biased toward polar residues. The fork-head DNA-binding region spans 474–564 (RPPFTYASLI…PQKISGNPSL (91 aa)). Residues 619–686 (MEHTNSNGSD…EDEPVNEDIE (68 aa)) are disordered. The span at 621–632 (HTNSNGSDSSPG) shows a compositional bias: polar residues. Over residues 676–686 (YEDEPVNEDIE) the composition is skewed to acidic residues.

It is found in the nucleus. Its function is as follows. Transcriptional repressor. In Gallus gallus (Chicken), this protein is Forkhead box protein P1 (FOXP1).